The chain runs to 206 residues: Cytidylate kinase (206 aa).

Residue 7–15 (GVAASGKSS) coordinates ATP.

The protein belongs to the cytidylate kinase family. Type 1 subfamily.

It localises to the cytoplasm. It carries out the reaction CMP + ATP = CDP + ADP. The enzyme catalyses dCMP + ATP = dCDP + ADP. This is Cytidylate kinase from Deinococcus radiodurans (strain ATCC 13939 / DSM 20539 / JCM 16871 / CCUG 27074 / LMG 4051 / NBRC 15346 / NCIMB 9279 / VKM B-1422 / R1).